Consider the following 555-residue polypeptide: Solute carrier family 22 member 2 (555 aa).

The Cytoplasmic portion of the chain corresponds to 1 to 21; sequence MSTVDDILEHIGEFHLFQKQT. Residues 22–42 traverse the membrane as a helical segment; sequence FFLLALLSGAFTPIYVGIVFL. At 43–150 the chain is on the extracellular side; sequence GFTPDHHCWS…LVCAHSWMLD (108 aa). Asn-71 is a glycosylation site (N-linked (GlcNAc...) asparagine). The helical transmembrane segment at 151–171 threads the bilayer; that stretch reads LFQSVVNVGFFIGAMMIGYLA. Topologically, residues 172–177 are cytoplasmic; the sequence is DRFGRK. A helical transmembrane segment spans residues 178–198; it reads FCLLVTILINAISGALMAISP. The Extracellular portion of the chain corresponds to 199–210; sequence NYAWMLVFRFLQ. A helical membrane pass occupies residues 211-231; it reads GLVSKAGWLIGYILITEFVGL. The Cytoplasmic portion of the chain corresponds to 232–238; it reads GYRRMVG. The chain crosses the membrane as a helical span at residues 239-259; that stretch reads ICYQIAFTVGLLILAGVAYVI. The Extracellular segment spans residues 260-263; it reads PNWR. The chain crosses the membrane as a helical span at residues 264-284; that stretch reads WLQFAVTLPNFCFLLYFWCIP. The Proline-rich sequence motif lies at 284–288; the sequence is PESPR. Residues 285–348 are Cytoplasmic-facing; it reads ESPRWLISQN…VRTPQIRKHT (64 aa). The helical transmembrane segment at 349–369 threads the bilayer; sequence LILMYNWFTSSVLYQGLIMHM. Residues 370–375 are Extracellular-facing; the sequence is GLAGDN. The helical transmembrane segment at 376 to 396 threads the bilayer; that stretch reads IYLDFFYSALVEFPAAFIIIL. The Cytoplasmic portion of the chain corresponds to 397–404; sequence TIDRVGRR. Residues 405 to 425 traverse the membrane as a helical segment; that stretch reads YPWAVSNMVAGAACLASVFIP. The Extracellular segment spans residues 426-432; the sequence is DDLQWLK. A helical transmembrane segment spans residues 433–453; sequence ITIACLGRMGITMAYEMVCLV. Topologically, residues 454 to 464 are cytoplasmic; the sequence is NAELYPTYIRN. Residues 465 to 485 traverse the membrane as a helical segment; sequence LGVLVCSSMCDIGGIITPFLV. Residues 486 to 494 are Extracellular-facing; the sequence is YRLTDIWME. Residues 495-515 traverse the membrane as a helical segment; that stretch reads FPLVVFAVVGLVAGALVLLLP. Residues 516–555 are Cytoplasmic-facing; that stretch reads ETKGKALPETIEDAENMQRPRKKKEKRIYLQVKQADRPLS.

The protein belongs to the major facilitator (TC 2.A.1) superfamily. Organic cation transporter (TC 2.A.1.19) family. Tyrosine phosphorylated. As to expression, expressed in the kidney, in the proximal tubules of cortex and of the outer medulla. In brain, highly expressed predominantly in regions located at the brain-cerebrospinal fluid border, in the leptomeninges, in the choroid plexus and in a layer boarding the third ventricle. In brain, also observed in the granular cell layer of the cerebellum and in the granular layer and pyramidal cells of the hippocampus in the CA1-CA3 regions. Expressed in tracheal and bronchial ciliated epithelium in the respiratory tract. Expression is greater in the kidney of male than of female.

It localises to the basolateral cell membrane. The protein localises to the basal cell membrane. Its subcellular location is the apical cell membrane. The catalysed reaction is (R)-noradrenaline(out) = (R)-noradrenaline(in). The enzyme catalyses (R)-adrenaline(out) = (R)-adrenaline(in). It catalyses the reaction serotonin(out) = serotonin(in). It carries out the reaction dopamine(out) = dopamine(in). The catalysed reaction is histamine(out) = histamine(in). The enzyme catalyses thiamine(in) = thiamine(out). It catalyses the reaction creatinine(in) = creatinine(out). It carries out the reaction 1-methylnicotinamide(out) = 1-methylnicotinamide(in). The catalysed reaction is guanidine(out) = guanidine(in). The enzyme catalyses choline(out) = choline(in). It catalyses the reaction agmatine(out) = agmatine(in). It carries out the reaction putrescine(out) = putrescine(in). The catalysed reaction is spermidine(in) = spermidine(out). The enzyme catalyses tyramine(in) = tyramine(out). It catalyses the reaction L-histidyl-L-proline diketopiperazine(in) = L-histidyl-L-proline diketopiperazine(out). It carries out the reaction (R)-salsolinol(in) = (R)-salsolinol(out). The catalysed reaction is N-methyl-(R)-salsolinol(in) = N-methyl-(R)-salsolinol(out). The enzyme catalyses acetylcholine(in) = acetylcholine(out). It catalyses the reaction prostaglandin F2alpha(out) = prostaglandin F2alpha(in). It carries out the reaction prostaglandin E2(out) = prostaglandin E2(in). With respect to regulation, tyrosine phosphorylation of the transporter leads to activation of the transport activity. Inhibited by cGMP, most likely through a cGMP-binding protein that interacts with OCT2. In terms of biological role, electrogenic voltage-dependent transporter that mediates the transport of a variety of organic cations such as endogenous bioactive amines, cationic drugs and xenobiotics. Functions as a Na(+)-independent, bidirectional uniporter. Cation cellular uptake or release is driven by the electrochemical potential, i.e. membrane potential and concentration gradient. However, may also engage electroneutral cation exchange when saturating concentrations of cation substrates are reached. Predominantly expressed at the basolateral membrane of hepatocytes and proximal tubules and involved in the uptake and disposition of cationic compounds by hepatic and renal clearance from the blood flow. Implicated in monoamine neurotransmitters uptake such as histamine, dopamine, adrenaline/epinephrine, noradrenaline/norepinephrine, serotonin and tyramine, thereby supporting a physiological role in the central nervous system by regulating interstitial concentrations of neurotransmitters. Also capable of transporting dopaminergic neuromodulators cyclo(his-pro), salsolinol and N-methyl-salsolinol, thereby involved in the maintenance of dopaminergic cell integrity in the central nervous system. Mediates the bidirectional transport of acetylcholine (ACh) at the apical membrane of ciliated cell in airway epithelium, thereby playing a role in luminal release of ACh from bronchial epithelium. Also transports guanidine and endogenous monoamines such as vitamin B1/thiamine, creatinine and N-1-methylnicotinamide (NMN). Mediates the uptake and efflux of quaternary ammonium compound choline. Mediates the bidirectional transport of polyamine agmatine and the uptake of polyamine putrescine. Able to transport non-amine endogenous compounds such as prostaglandin E2 (PGE2) and prostaglandin F2-alpha (PGF2-alpha). Also involved in the uptake of xenobiotic 4-(4-(dimethylamino)styryl)-N-methylpyridinium (ASP). May contribute to regulate the transport of organic compounds in testis across the blood-testis-barrier. This is Solute carrier family 22 member 2 from Rattus norvegicus (Rat).